The following is a 96-amino-acid chain: Small ribosomal subunit protein bS6 (96 aa).

The protein belongs to the bacterial ribosomal protein bS6 family.

Functionally, binds together with bS18 to 16S ribosomal RNA. This is Small ribosomal subunit protein bS6 from Thermobifida fusca (strain YX).